The sequence spans 231 residues: uncharacterized protein (231 aa).

10–34 (IITGASSGIGAATAKALEKQGVKVV) provides a ligand contact to NADP(+). Residue Ser-140 coordinates substrate. Tyr-153 serves as the catalytic Proton acceptor.

The protein belongs to the short-chain dehydrogenases/reductases (SDR) family.

This is an uncharacterized protein from Staphylococcus haemolyticus (strain JCSC1435).